The sequence spans 173 residues: Transcriptional repressor NrdR (173 aa).

A zinc finger lies at 3 to 34; sequence CPFCQHADTRVIDSRVSEDGATIRRRRECEAC. Residues 49 to 139 form the ATP-cone domain; that stretch reads PAIVKSDGTR…VYRSFEDVAD (91 aa).

Belongs to the NrdR family. Zn(2+) serves as cofactor.

Its function is as follows. Negatively regulates transcription of bacterial ribonucleotide reductase nrd genes and operons by binding to NrdR-boxes. The polypeptide is Transcriptional repressor NrdR (Stenotrophomonas maltophilia (strain R551-3)).